The sequence spans 119 residues: Large ribosomal subunit protein bL20 (119 aa).

Belongs to the bacterial ribosomal protein bL20 family.

Its function is as follows. Binds directly to 23S ribosomal RNA and is necessary for the in vitro assembly process of the 50S ribosomal subunit. It is not involved in the protein synthesizing functions of that subunit. The polypeptide is Large ribosomal subunit protein bL20 (Rhodospirillum centenum (strain ATCC 51521 / SW)).